An 81-amino-acid polypeptide reads, in one-letter code: MASLKKSLFLVLFLGLVSLSICEEEKRENEDEEEQEDDEQSEMKRGLWSNIKTAGKEAAKAALKAAGKAALGAVTDAVGEQ.

An N-terminal signal peptide occupies residues 1–22 (MASLKKSLFLVLFLGLVSLSIC). The propeptide occupies 23–44 (EEEKRENEDEEEQEDDEQSEMK). The tract at residues 24 to 48 (EEKRENEDEEEQEDDEQSEMKRGLW) is disordered. Residues 30 to 40 (EDEEEQEDDEQ) show a composition bias toward acidic residues. Val78 bears the Valine amide mark. A propeptide spanning residues 80–81 (EQ) is cleaved from the precursor.

This sequence belongs to the frog skin active peptide (FSAP) family. Dermaseptin subfamily. As to expression, expressed by the skin glands.

It localises to the secreted. Functionally, has antimicrobial activity. This chain is Dermaseptin-B7 (DRG1), found in Phyllomedusa bicolor (Two-colored leaf frog).